Consider the following 440-residue polypeptide: Phosphatidylcholine-sterol acyltransferase (440 aa).

Positions 1 to 24 (MGLPGSPWQWVLLLLGLLLPPATS) are cleaved as a signal peptide. N-linked (GlcNAc...) asparagine glycosylation occurs at Asn44. Residues Cys74 and Cys98 are joined by a disulfide bond. Asn108 carries N-linked (GlcNAc...) asparagine glycosylation. Catalysis depends on Ser205, which acts as the Nucleophile. N-linked (GlcNAc...) asparagine glycosylation is present at Asn296. A disulfide bridge links Cys337 with Cys380. Catalysis depends on Asp369, which acts as the Charge relay system. N-linked (GlcNAc...) asparagine glycosylation occurs at Asn397. His401 functions as the Charge relay system in the catalytic mechanism. The N-linked (GlcNAc...) asparagine glycan is linked to Asn408.

This sequence belongs to the AB hydrolase superfamily. Lipase family. As to expression, detected in blood plasma (at protein level).

It localises to the secreted. The catalysed reaction is a sterol + a 1,2-diacyl-sn-glycero-3-phosphocholine = a sterol ester + a 1-acyl-sn-glycero-3-phosphocholine. It carries out the reaction a 1-O-alkyl-2-acetyl-sn-glycero-3-phosphocholine + H2O = a 1-O-alkyl-sn-glycero-3-phosphocholine + acetate + H(+). It catalyses the reaction 1-hexadecanoyl-2-(9Z,12Z-octadecadienoyl)-sn-glycero-3-phosphocholine + H2O = (9Z,12Z)-octadecadienoate + 1-hexadecanoyl-sn-glycero-3-phosphocholine + H(+). The enzyme catalyses 1-hexadecanoyl-2-(5Z,8Z,11Z,14Z-eicosatetraenoyl)-sn-glycero-3-phosphocholine + H2O = 1-hexadecanoyl-sn-glycero-3-phosphocholine + (5Z,8Z,11Z,14Z)-eicosatetraenoate + H(+). The catalysed reaction is 1-hexadecanoyl-2-(5Z,8Z,11Z,14Z-eicosatetraenoyl)-sn-glycero-3-phosphocholine + cholesterol = cholesteryl (5Z,8Z,11Z,14Z)-eicosatetraenoate + 1-hexadecanoyl-sn-glycero-3-phosphocholine. It carries out the reaction 1-hexadecanoyl-2-(9Z-octadecenoyl)-sn-glycero-3-phosphocholine + cholesterol = cholesteryl (9Z-octadecenoate) + 1-hexadecanoyl-sn-glycero-3-phosphocholine. It catalyses the reaction a 1-hexadecanoyl-2-acyl-sn-glycero-3-phosphocholine + (24S)-hydroxycholesterol = (24S)-24-hydroxycholesterol ester + 1-hexadecanoyl-sn-glycero-3-phosphocholine. The enzyme catalyses (24S)-hydroxycholesterol + 1-hexadecanoyl-2-(9Z,12Z-octadecadienoyl)-sn-glycero-3-phosphocholine = (24S)-hydroxycholesterol 3-linoleoate + 1-hexadecanoyl-sn-glycero-3-phosphocholine. The catalysed reaction is 1-hexadecanoyl-2-(8Z,11Z,14Z-eicosatrienoyl)-sn-glycero-3-phosphocholine + cholesterol = cholesteryl (8Z,11Z,14Z)-eicosatrienoate + 1-hexadecanoyl-sn-glycero-3-phosphocholine. It carries out the reaction 1-hexadecanoyl-2-(5Z,8Z,11Z-eicosatrienoyl)-sn-glycero-3-phosphocholine + cholesterol = cholesteryl (5Z,8Z,11Z)-eicosatrienoate + 1-hexadecanoyl-sn-glycero-3-phosphocholine. It catalyses the reaction 1-hexadecanoyl-2-(5Z,8Z,11Z,14Z,17Z-eicosapentaenoyl)-sn-glycero-3-phosphocholine + cholesterol = (5Z,8Z,11Z,14Z,17Z-eicosapentaenoyl)-cholesterol + 1-hexadecanoyl-sn-glycero-3-phosphocholine. The enzyme catalyses 1-hexadecanoyl-2-(9Z,12Z-octadecadienoyl)-sn-glycero-3-phosphocholine + cholesterol = cholesteryl (9Z,12Z)-octadecadienoate + 1-hexadecanoyl-sn-glycero-3-phosphocholine. The catalysed reaction is 1-hexadecanoyl-2-(6Z,9Z,12Z-octadecatrienoyl)-sn-glycero-3-phosphocholine + cholesterol = (6Z,9Z,12Z-octadecatrienoyl)-cholesterol + 1-hexadecanoyl-sn-glycero-3-phosphocholine. It carries out the reaction 1-hexadecanoyl-2-(11Z,14Z,17Z-eicosatrienoyl)-sn-glycero-3-phosphocholine + cholesterol = (11Z,14Z,17Z-eicosatrienoyl)-cholesterol + 1-hexadecanoyl-sn-glycero-3-phosphocholine. It catalyses the reaction 1-hexadecanoyl-2-(9Z,12Z,15Z-octadecatrienoyl)-sn-glycero-3-phosphocholine + cholesterol = (9Z,12Z,15Z-octadecatrienoyl)-cholesterol + 1-hexadecanoyl-sn-glycero-3-phosphocholine. The enzyme catalyses a 1-O-alkyl-2-acetyl-sn-glycero-3-phosphocholine + 1-hexadecanoyl-sn-glycero-3-phosphocholine = 1-hexadecanoyl-2-acetyl-sn-glycero-3-phosphocholine + a 1-O-alkyl-sn-glycero-3-phosphocholine. In terms of biological role, central enzyme in the extracellular metabolism of plasma lipoproteins. Synthesized mainly in the liver and secreted into plasma where it converts cholesterol and phosphatidylcholines (lecithins) to cholesteryl esters and lysophosphatidylcholines on the surface of high and low density lipoproteins (HDLs and LDLs). The cholesterol ester is then transported back to the liver. Also produced in the brain by primary astrocytes, and esterifies free cholesterol on nascent APOE-containing lipoproteins secreted from glia and influences cerebral spinal fluid (CSF) APOE- and APOA1 levels. Together with APOE and the cholesterol transporter ABCA1, plays a key role in the maturation of glial-derived, nascent lipoproteins. Required for remodeling high-density lipoprotein particles into their spherical forms. Has a preference for plasma 16:0-18:2 or 18:O-18:2 phosphatidylcholines. Catalyzes the hydrolysis of 1-O-alkyl-2-acetyl-sn-glycero-3-phosphocholine (platelet-activating factor or PAF) to 1-O-alkyl-sn-glycero-3-phosphocholine (lyso-PAF). Also catalyzes the transfer of the acetate group from PAF to 1-hexadecanoyl-sn-glycero-3-phosphocholine forming lyso-PAF. Catalyzes the esterification of (24S)-hydroxycholesterol (24(S)OH-C), also known as cerebrosterol to produce 24(S)OH-C monoesters. This chain is Phosphatidylcholine-sterol acyltransferase (Lcat), found in Rattus norvegicus (Rat).